A 270-amino-acid polypeptide reads, in one-letter code: L-fucose dehydrogenase (270 aa).

NAD(+) is bound by residues R19, I21, D40, K41, D62, V63, N89, Y154, K158, I187, T189, and L191. Y154 serves as the catalytic Proton acceptor.

It belongs to the short-chain dehydrogenases/reductases (SDR) family. As to quaternary structure, homotetramer. As to expression, detected in retina.

It localises to the cytoplasm. The enzyme catalyses L-fucose + NAD(+) = L-fucono-1,5-lactone + NADH + H(+). It catalyses the reaction D-arabinose + NAD(+) = D-arabinono-1,5-lactone + NADH + H(+). It carries out the reaction L-galactose + NAD(+) = L-galactono-1,5-lactone + NADH + H(+). It participates in carbohydrate degradation; L-fucose degradation. Its function is as follows. Catalyzes the NAD(+)-dependent oxidation of L-fucose, yielding L-fucono-1,5-lactone, which rapidly converts spontaneously to L-fucone-1,4-lactone. Can also act on D-arabinose and L-galactose, with lower catalytic efficiency. Does not use NADPH. May be the initial enzyme of the putative L-fucose degradation pathway in mammals. The sequence is that of L-fucose dehydrogenase (HSD17B14) from Bos taurus (Bovine).